A 214-amino-acid polypeptide reads, in one-letter code: Adenylate kinase (214 aa).

14-19 is a binding site for ATP; it reads GSGKGT. Residues 32-61 form an NMP region; the sequence is SVGKVLRTVMESNTAEADVVKKFIKSGKLV. AMP-binding positions include R38, 59-61, 87-90, and Q94; these read KLV and GYPR. An LID region spans residues 124-162; the sequence is GRISCTDCGTIYNKLYCMPKINGVCDICNSSSFQNRVDD. R125 lines the ATP pocket. Residues C128 and C131 each coordinate Zn(2+). 134-135 provides a ligand contact to ATP; it reads IY. Positions 148 and 151 each coordinate Zn(2+). R159 and R170 together coordinate AMP. Q198 is a binding site for ATP.

Belongs to the adenylate kinase family. Monomer.

The protein localises to the cytoplasm. The catalysed reaction is AMP + ATP = 2 ADP. It participates in purine metabolism; AMP biosynthesis via salvage pathway; AMP from ADP: step 1/1. Catalyzes the reversible transfer of the terminal phosphate group between ATP and AMP. Plays an important role in cellular energy homeostasis and in adenine nucleotide metabolism. This Orientia tsutsugamushi (strain Ikeda) (Rickettsia tsutsugamushi) protein is Adenylate kinase.